Reading from the N-terminus, the 313-residue chain is Tyrosine recombinase slr0733 (313 aa).

Residues Asn-7–Arg-101 enclose the Core-binding (CB) domain. The Tyr recombinase domain maps to Arg-122 to Asp-307. Catalysis depends on residues Arg-162, Lys-188, His-258, Arg-261, and His-285. The active-site O-(3'-phospho-DNA)-tyrosine intermediate is Tyr-294.

It belongs to the 'phage' integrase family.

Its subcellular location is the cytoplasm. Site-specific tyrosine recombinase, which acts by catalyzing the cutting and rejoining of the recombining DNA molecules. In Synechocystis sp. (strain ATCC 27184 / PCC 6803 / Kazusa), this protein is Tyrosine recombinase slr0733.